The sequence spans 285 residues: Putative cysteine-rich repeat secretory protein 14 (285 aa).

The first 30 residues, 1-30 (MSSFCLSKHLILVPILVMMAQLLLIRNVLS), serve as a signal peptide directing secretion. Gnk2-homologous domains lie at 37 to 143 (YLYH…SIST) and 161 to 273 (RPNA…RYPF).

It belongs to the cysteine-rich repeat secretory protein family.

The protein resides in the secreted. The protein is Putative cysteine-rich repeat secretory protein 14 (CRRSP14) of Arabidopsis thaliana (Mouse-ear cress).